Consider the following 510-residue polypeptide: Glycerol kinase (510 aa).

Residue threonine 12 participates in ADP binding. ATP contacts are provided by threonine 12, threonine 13, and serine 14. Threonine 12 is a sn-glycerol 3-phosphate binding site. Position 16 (arginine 16) interacts with ADP. Arginine 82, glutamate 83, and tyrosine 134 together coordinate sn-glycerol 3-phosphate. Glycerol is bound by residues arginine 82, glutamate 83, and tyrosine 134. Histidine 230 carries the post-translational modification Phosphohistidine; by HPr. Position 244 (aspartate 244) interacts with sn-glycerol 3-phosphate. The glycerol site is built by aspartate 244 and glutamine 245. Threonine 266 and glycine 309 together coordinate ADP. Residues threonine 266, glycine 309, glutamine 313, and glycine 410 each coordinate ATP. 2 residues coordinate ADP: glycine 410 and asparagine 414.

This sequence belongs to the FGGY kinase family. As to quaternary structure, homotetramer and homodimer (in equilibrium). In terms of processing, the phosphoenolpyruvate-dependent sugar phosphotransferase system (PTS), including enzyme I, and histidine-containing protein (HPr) are required for the phosphorylation, which leads to the activation of the enzyme.

It catalyses the reaction glycerol + ATP = sn-glycerol 3-phosphate + ADP + H(+). Its pathway is polyol metabolism; glycerol degradation via glycerol kinase pathway; sn-glycerol 3-phosphate from glycerol: step 1/1. Its activity is regulated as follows. Activated by phosphorylation and inhibited by fructose 1,6-bisphosphate (FBP). Key enzyme in the regulation of glycerol uptake and metabolism. Catalyzes the phosphorylation of glycerol to yield sn-glycerol 3-phosphate. This chain is Glycerol kinase, found in Bacillus cereus (strain ATCC 10987 / NRS 248).